The following is a 175-amino-acid chain: Large ribosomal subunit protein uL10 (175 aa).

Belongs to the universal ribosomal protein uL10 family. As to quaternary structure, part of the ribosomal stalk of the 50S ribosomal subunit. The N-terminus interacts with L11 and the large rRNA to form the base of the stalk. The C-terminus forms an elongated spine to which L12 dimers bind in a sequential fashion forming a multimeric L10(L12)X complex.

Its function is as follows. Forms part of the ribosomal stalk, playing a central role in the interaction of the ribosome with GTP-bound translation factors. This is Large ribosomal subunit protein uL10 from Synechococcus sp. (strain CC9605).